Consider the following 662-residue polypeptide: Portal protein (662 aa).

Polar residues predominate over residues 1–26; the sequence is MHRASANSPLNSVSGSMMWRNQSSGR. The disordered stretch occupies residues 1 to 35; that stretch reads MHRASANSPLNSVSGSMMWRNQSSGRRPSKRLSDN.

It belongs to the herpesviridae portal protein family. As to quaternary structure, homododecamerizes. Interacts with terminase subunits TRM1 and TRM3.

Its subcellular location is the virion. It is found in the host nucleus. Its function is as follows. Forms a portal in the viral capsid through which viral DNA is translocated during DNA packaging. Assembles as a dodecamer at a single fivefold axe of the T=16 icosahedric capsid. Binds to the molecular motor that translocates the viral DNA, termed terminase. This chain is Portal protein (U76), found in Human herpesvirus 6B (strain Z29) (HHV-6 variant B).